The chain runs to 473 residues: Bifunctional protein HldE (473 aa).

Residues 1 to 318 (MKLSMPRFDQ…RAIQREEGSE (318 aa)) are ribokinase. 194-197 (NLSE) lines the ATP pocket. Asp263 is an active-site residue. Positions 343–473 (FTNGCFDILH…TAIVEKIRKN (131 aa)) are cytidylyltransferase.

In the N-terminal section; belongs to the carbohydrate kinase PfkB family. It in the C-terminal section; belongs to the cytidylyltransferase family. Homodimer.

The catalysed reaction is D-glycero-beta-D-manno-heptose 7-phosphate + ATP = D-glycero-beta-D-manno-heptose 1,7-bisphosphate + ADP + H(+). The enzyme catalyses D-glycero-beta-D-manno-heptose 1-phosphate + ATP + H(+) = ADP-D-glycero-beta-D-manno-heptose + diphosphate. The protein operates within nucleotide-sugar biosynthesis; ADP-L-glycero-beta-D-manno-heptose biosynthesis; ADP-L-glycero-beta-D-manno-heptose from D-glycero-beta-D-manno-heptose 7-phosphate: step 1/4. Its pathway is nucleotide-sugar biosynthesis; ADP-L-glycero-beta-D-manno-heptose biosynthesis; ADP-L-glycero-beta-D-manno-heptose from D-glycero-beta-D-manno-heptose 7-phosphate: step 3/4. Its function is as follows. Catalyzes the phosphorylation of D-glycero-D-manno-heptose 7-phosphate at the C-1 position to selectively form D-glycero-beta-D-manno-heptose-1,7-bisphosphate. In terms of biological role, catalyzes the ADP transfer from ATP to D-glycero-beta-D-manno-heptose 1-phosphate, yielding ADP-D-glycero-beta-D-manno-heptose. This Pseudomonas putida (strain GB-1) protein is Bifunctional protein HldE.